We begin with the raw amino-acid sequence, 341 residues long: 4-amino-5-hydroxymethyl-2-methylpyrimidine phosphate synthase (341 aa).

Lys-62 carries the post-translational modification N6-(pyridoxal phosphate)lysine. The active site involves His-66. 115-118 lines the pyridoxal 5'-phosphate pocket; sequence GEFG. The CCCFC; essential for catalytic activity, may be the site of iron coordination signature appears at 195 to 199; that stretch reads CCCFC.

This sequence belongs to the NMT1/THI5 family. Homodimer. Requires Fe cation as cofactor.

It carries out the reaction N(6)-(pyridoxal phosphate)-L-lysyl-[4-amino-5-hydroxymethyl-2-methylpyrimidine phosphate synthase] + L-histidyl-[4-amino-5-hydroxymethyl-2-methylpyrimidine phosphate synthase] + 2 Fe(3+) + 4 H2O = L-lysyl-[4-amino-5-hydroxymethyl-2-methylpyrimidine phosphate synthase] + (2S)-2-amino-5-hydroxy-4-oxopentanoyl-[4-amino-5-hydroxymethyl-2-methylpyrimidine phosphate synthase] + 4-amino-2-methyl-5-(phosphooxymethyl)pyrimidine + 3-oxopropanoate + 2 Fe(2+) + 2 H(+). The protein operates within cofactor biosynthesis; thiamine diphosphate biosynthesis. Its function is as follows. Responsible for the formation of the pyrimidine heterocycle in the thiamine biosynthesis pathway. Catalyzes the formation of hydroxymethylpyrimidine phosphate (HMP-P) from histidine and pyridoxal phosphate (PLP). The protein uses PLP and the active site histidine to form HMP-P, generating an inactive enzyme. The enzyme can only undergo a single turnover, which suggests it is a suicide enzyme. This is 4-amino-5-hydroxymethyl-2-methylpyrimidine phosphate synthase from Uromyces fabae (Rust fungus).